The primary structure comprises 780 residues: Protein phosphatase 1 regulatory subunit 21 (780 aa).

2 coiled-coil regions span residues 1–207 (MASA…LKTL) and 556–607 (ESRE…LKNT). A disordered region spans residues 84 to 104 (EPRGKKNKKSGESSSQLSQEQ). The span at 95-104 (ESSSQLSQEQ) shows a compositional bias: low complexity. T652 carries the post-translational modification Phosphothreonine. Residues 693–742 (YAECRALSKRLALAEKSKEALTEEMKLASQNISRLQDELTTTKRSYEDQL) adopt a coiled-coil conformation. Positions 760–780 (REEIDTLKMSSKGNSKKNKSR) are disordered.

Component of the FERRY complex, composed of five subunits: TBCK, PPP1R21, FERRY3, CRYZL1 and GATAD1, with a ratio of 1:2:1:2:4 respectively. PPP1R21 serves as a binding hub connecting all five complex subunits to mediate the binding to specific mitochondrial mRNAs. Interacts with the GTP-bound form of RAB5A (via its C-terminal region); linking the mRNP complex onto trafficking endosomes for active mRNA transport. Interacts with PPP1CA.

It localises to the early endosome. In terms of biological role, component of the FERRY complex (Five-subunit Endosomal Rab5 and RNA/ribosome intermediary). The FERRY complex directly interacts with mRNAs and RAB5A, and functions as a RAB5A effector involved in the localization and the distribution of specific mRNAs most likely by mediating their endosomal transport. The complex recruits mRNAs and ribosomes to early endosomes through direct mRNA-interaction. In the complex, PPP1R21 serves as a binding hub connecting all five complex subunits and mediating the binding to mRNA and early endosomes via RAB5A. Putative regulator of protein phosphatase 1 (PP1) activity. May play a role in the endosomal sorting process or in endosome maturation pathway. This is Protein phosphatase 1 regulatory subunit 21 (PPP1R21) from Homo sapiens (Human).